The sequence spans 619 residues: Zinc finger and BTB domain-containing protein 7C (619 aa).

Positions 34-101 (CDVLLVVQEQ…AYTSTLTITA (68 aa)) constitute a BTB domain. Residues 129 to 218 (PGGDGGEEDD…DSFQAGSPGH (90 aa)) form a disordered region. Over residues 133–173 (GGEEDDKEDDDDDEDDDDEEDEEEEEEEEEDDDDDTEDFAD) the composition is skewed to acidic residues. Residues 191–208 (KTDHLTEKAYSDTPRDFP) are compositionally biased toward basic and acidic residues. C2H2-type zinc fingers lie at residues 364–386 (QQCP…MRTH), 392–414 (YMCT…MRKH), and 420–442 (YLCI…MRIH). A C2H2-type 4; degenerate zinc finger spans residues 448–478 (YQCEFCYKSFTRSDHLHRHIKRQSCRMARPR).

As to expression, detected in normal cervical keratinocytes, and in some cervical carcinoma cell lines.

Its function is as follows. May be a tumor suppressor gene. This chain is Zinc finger and BTB domain-containing protein 7C (ZBTB7C), found in Homo sapiens (Human).